A 273-amino-acid chain; its full sequence is L-cysteine S-thiosulfotransferase subunit SoxA (273 aa).

The signal sequence occupies residues 1–24 (MKKTVTAVALLCALSSTAIAPTFA). The cysteines at positions 74 and 110 are disulfide-linked. One can recognise a Cytochrome c domain in the interval 162 to 273 (EMYELGKRMF…GVMLTPGIKR (112 aa)). Heme-binding residues include cysteine 182 and histidine 186. Arginine 230 is a substrate binding site. Cysteine 234 contacts heme. Cysteine 234 serves as the catalytic Cysteine persulfide intermediate.

This sequence belongs to the SoxA family. In terms of assembly, heterodimer of SoxA and SoxX. It depends on heme as a cofactor. In terms of processing, cysteine persulfide at Cys-234.

It localises to the periplasm. It catalyses the reaction L-cysteinyl-[SoxY protein] + thiosulfate + 2 Fe(III)-[cytochrome c] = S-sulfosulfanyl-L-cysteinyl-[SoxY protein] + 2 Fe(II)-[cytochrome c] + 2 H(+). The enzyme catalyses S-sulfanyl-L-cysteinyl-[SoxY protein] + thiosulfate + 2 Fe(III)-[cytochrome c] = S-(2-sulfodisulfanyl)-L-cysteinyl-[SoxY protein] + 2 Fe(II)-[cytochrome c] + 2 H(+). In terms of biological role, C-type monoheme cytochrome, which is part of the SoxAX cytochrome complex involved in sulfur oxidation. The SoxAX complex catalyzes the formation of a heterodisulfide bond between the conserved cysteine residue on a sulfur carrier SoxYZ complex subunit SoxY and thiosulfate or other inorganic sulfur substrates. This leads to the liberation of two electrons, which may be transferred from the SoxAX complex to another cytochrome c that then channels them into the respiratory electron transport chain. Some electrons may be used for reductive CO(2) fixation. This Hydrogenophilus thermoluteolus (Pseudomonas hydrogenothermophila) protein is L-cysteine S-thiosulfotransferase subunit SoxA.